Reading from the N-terminus, the 150-residue chain is 16.6 kDa heat shock protein (150 aa).

The sHSP domain occupies 31–150; it reads AERCPVLTNV…PQLKAIPISG (120 aa).

The protein belongs to the small heat shock protein (HSP20) family. In terms of assembly, may form oligomeric structures.

Its subcellular location is the cytoplasm. This is 16.6 kDa heat shock protein (HSP16.6) from Oryza sativa subsp. japonica (Rice).